A 336-amino-acid chain; its full sequence is Holliday junction branch migration complex subunit RuvB (336 aa).

A large ATPase domain (RuvB-L) region spans residues 4–184; the sequence is ADRLISAGTT…FGIVQRLEFY (181 aa). Residues I23, R24, G65, K68, T69, T70, 131–133, R174, Y184, and R221 each bind ATP; that span reads EDY. T69 provides a ligand contact to Mg(2+). Positions 185 to 255 are small ATPAse domain (RuvB-S); it reads QVPDLQYIVS…IAAQALDMLN (71 aa). Positions 258 to 336 are head domain (RuvB-H); the sequence is AEGFDYMDRK…HFGITPPEMP (79 aa). Positions 294, 313, and 318 each coordinate DNA.

The protein belongs to the RuvB family. In terms of assembly, homohexamer. Forms an RuvA(8)-RuvB(12)-Holliday junction (HJ) complex. HJ DNA is sandwiched between 2 RuvA tetramers; dsDNA enters through RuvA and exits via RuvB. An RuvB hexamer assembles on each DNA strand where it exits the tetramer. Each RuvB hexamer is contacted by two RuvA subunits (via domain III) on 2 adjacent RuvB subunits; this complex drives branch migration. In the full resolvosome a probable DNA-RuvA(4)-RuvB(12)-RuvC(2) complex forms which resolves the HJ.

It localises to the cytoplasm. The catalysed reaction is ATP + H2O = ADP + phosphate + H(+). Functionally, the RuvA-RuvB-RuvC complex processes Holliday junction (HJ) DNA during genetic recombination and DNA repair, while the RuvA-RuvB complex plays an important role in the rescue of blocked DNA replication forks via replication fork reversal (RFR). RuvA specifically binds to HJ cruciform DNA, conferring on it an open structure. The RuvB hexamer acts as an ATP-dependent pump, pulling dsDNA into and through the RuvAB complex. RuvB forms 2 homohexamers on either side of HJ DNA bound by 1 or 2 RuvA tetramers; 4 subunits per hexamer contact DNA at a time. Coordinated motions by a converter formed by DNA-disengaged RuvB subunits stimulates ATP hydrolysis and nucleotide exchange. Immobilization of the converter enables RuvB to convert the ATP-contained energy into a lever motion, pulling 2 nucleotides of DNA out of the RuvA tetramer per ATP hydrolyzed, thus driving DNA branch migration. The RuvB motors rotate together with the DNA substrate, which together with the progressing nucleotide cycle form the mechanistic basis for DNA recombination by continuous HJ branch migration. Branch migration allows RuvC to scan DNA until it finds its consensus sequence, where it cleaves and resolves cruciform DNA. The chain is Holliday junction branch migration complex subunit RuvB from Shigella boydii serotype 18 (strain CDC 3083-94 / BS512).